The chain runs to 242 residues: MTEVVPSSALSEVSLRLLCHDDIDTVKHLCGDWFPIEYPDSWYRDITSNKKFFSLAATYRGAIVGMIVAEIKNRTKIHKEDGDILASNFSVDTQVAYILSLGVVKEFRKHGIGSLLLESLKDHISTTAQDHCKAIYLHVLTTNNTAINFYENRDFKQHHYLPYYYSIRGVLKDGFTYVLYINGGHPPWTILDYIQHLGSALASLSPCSIPHRVYRQAHSLLCSFLPWSGISSKSGIEYSRTM.

Topologically, residues 1-192 are cytoplasmic; the sequence is MTEVVPSSAL…GGHPPWTILD (192 aa). The region spanning 13-182 is the N-acetyltransferase domain; that stretch reads VSLRLLCHDD…DGFTYVLYIN (170 aa). Position 38 (Tyr38) interacts with substrate. Lys79 is subject to N6-acetyllysine; by autocatalysis. Residue Tyr97 is part of the active site. Residue Leu99 coordinates substrate. 101-103 provides a ligand contact to acetyl-CoA; that stretch reads LGV. N6-acetyllysine; by autocatalysis occurs at positions 105, 109, and 121. 109–114 lines the acetyl-CoA pocket; it reads KHGIGS. Residue His138 is part of the active site. Acetyl-CoA contacts are provided by residues Asn143 and 150 to 153; that span reads YENR. Lys156 is modified (N6-acetyllysine; by autocatalysis). The interval 162–173 is required for homodimerization; it reads PYYYSIRGVLKD. Substrate is bound at residue Tyr165. Residues 193 to 236 constitute an intramembrane region (helical); sequence YIQHLGSALASLSPCSIPHRVYRQAHSLLCSFLPWSGISSKSGI. Residues 237-242 are Cytoplasmic-facing; the sequence is EYSRTM.

This sequence belongs to the acetyltransferase family. NAA60 subfamily. In terms of assembly, monomer and homodimer; monomer in presence of substrate and homodimer in its absence. Post-translationally, acetylated: autoacetylation is required for optimal acetyltransferase activity.

The protein resides in the golgi apparatus membrane. It catalyses the reaction N-terminal L-methionyl-[transmembrane protein] + acetyl-CoA = N-terminal N(alpha)-acetyl-L-methionyl-[transmembrane protein] + CoA + H(+). The catalysed reaction is L-lysyl-[protein] + acetyl-CoA = N(6)-acetyl-L-lysyl-[protein] + CoA + H(+). Functionally, N-alpha-acetyltransferase that specifically mediates the acetylation of N-terminal residues of the transmembrane proteins, with a strong preference for N-termini facing the cytosol. Displays N-terminal acetyltransferase activity towards a range of N-terminal sequences including those starting with Met-Lys, Met-Val, Met-Ala and Met-Met. Required for normal chromosomal segregation during anaphase. May also show histone acetyltransferase activity; such results are however unclear in vivo and would require additional experimental evidences. The sequence is that of N-alpha-acetyltransferase 60 from Homo sapiens (Human).